Reading from the N-terminus, the 162-residue chain is MGLETEKADVQLFMDDDSYSHHSGLEYADPEKFVDSGQDRDPHRLNSHLKLGFEDVIAEPVTTHSFDKVWICSHALFEISKYVMYKFLTVFLAIPLAFLAGILFATLSCLHIWIIMPFVKTCLMVLPSVQTIWKSVTDAIIAPLCTSIGRSFSSVSLQLSQD.

At 1–86 (MGLETEKADV…FEISKYVMYK (86 aa)) the chain is on the cytoplasmic side. At Tyr-19 the chain carries Phosphotyrosine; by SRC. 2 positions are modified to phosphoserine: Ser-20 and Ser-23. Residue Tyr-27 is modified to Phosphotyrosine; by SRC. Ser-36 is modified (phosphoserine). Residues 87–107 (FLTVFLAIPLAFLAGILFATL) constitute an intramembrane region (helical). Over 108-162 (SCLHIWIIMPFVKTCLMVLPSVQTIWKSVTDAIIAPLCTSIGRSFSSVSLQLSQD) the chain is Cytoplasmic.

It belongs to the caveolin family. In terms of assembly, monomer or homodimer. Interacts with CAV1; the interaction forms a stable heterooligomeric complex that is required for targeting to lipid rafts and for caveolae formation. Tyrosine phosphorylated forms do not form heterooligomers with the Tyr-19-phosphorylated form existing as a monomer or dimer, and the Tyr-27-form as a monomer only. Interacts (tyrosine phosphorylated form) with the SH2 domain-containing proteins, RASA1, NCK1 and SRC. Interacts (tyrosine phosphorylated form) with INSR, the interaction (Tyr-27-phosphorylated form) is increased on insulin stimulation. Interacts (Tyr-19 phosphorylated form) with MAPK1 (phosphorylated form); the interaction, promoted by insulin, leads to nuclear location and MAPK1 activation. Interacts with STAT3; the interaction is increased on insulin-induced tyrosine phosphorylation leading to STAT activation. Phosphorylated on serine and tyrosine residues. CAV1 promotes phosphorylation on Ser-23 which then targets the complex to the plasma membrane, lipid rafts and caveolae. Phosphorylation on Ser-36 appears to modulate mitosis in endothelial cells. Phosphorylation on both Tyr-19 and Tyr-27 is required for insulin-induced 'Ser-727' phosphorylation of STAT3 and its activation. Phosphorylation on Tyr-19 is required for insulin-induced phosphorylation of MAPK1 and DNA binding of STAT3. Tyrosine phosphorylation is induced by both EGF and insulin (By. similarity).

It is found in the nucleus. Its subcellular location is the cytoplasm. The protein localises to the golgi apparatus membrane. The protein resides in the cell membrane. It localises to the membrane. It is found in the caveola. Its function is as follows. May act as a scaffolding protein within caveolar membranes. Interacts directly with G-protein alpha subunits and can functionally regulate their activity. Acts as an accessory protein in conjunction with CAV1 in targeting to lipid rafts and driving caveolae formation. The Ser-36 phosphorylated form has a role in modulating mitosis in endothelial cells. Positive regulator of cellular mitogenesis of the MAPK signaling pathway. Required for the insulin-stimulated nuclear translocation and activation of MAPK1 and STAT3, and the subsequent regulation of cell cycle progression. This is Caveolin-2 (CAV2) from Callithrix jacchus (White-tufted-ear marmoset).